Reading from the N-terminus, the 504-residue chain is 5-epiaristolochene 1,3-dihydroxylase (504 aa).

A helical membrane pass occupies residues 2 to 22 (QFFSLVSIFLFLSFLFLLRKW). Residue C442 participates in heme binding.

Belongs to the cytochrome P450 family. Heme is required as a cofactor.

It localises to the membrane. It carries out the reaction (+)-5-epi-aristolochene + 2 reduced [NADPH--hemoprotein reductase] + 2 O2 = capsidiol + 2 oxidized [NADPH--hemoprotein reductase] + 2 H2O + 2 H(+). Its activity is regulated as follows. Inhibited by ancymidol and ketoconazole. Its function is as follows. Involved in the biosynthesis of capsidiol. Catalyzes the successive and independent hydroxylations at the C1 and C3 positions of 5-epiaristolochene. The second hydroxylation step is 8-fold more efficient than the first hydroxylation reaction. Capable of utilizing premnaspirodiene as a substrate. In Nicotiana tabacum (Common tobacco), this protein is 5-epiaristolochene 1,3-dihydroxylase (CYP71D20).